Here is a 312-residue protein sequence, read N- to C-terminus: Dihydroorotate dehydrogenase B (NAD(+)), catalytic subunit (312 aa).

Residues serine 23 and 47 to 48 (KA) each bind FMN. Substrate is bound by residues lysine 47 and 71–75 (NAIGL). Residues asparagine 102 and asparagine 130 each coordinate FMN. Asparagine 130 is a substrate binding site. Cysteine 133 serves as the catalytic Nucleophile. Lysine 168 and isoleucine 194 together coordinate FMN. Residue 195-196 (NT) participates in substrate binding. Residues glycine 220, 246–247 (GG), and 268–269 (GT) each bind FMN.

Belongs to the dihydroorotate dehydrogenase family. Type 1 subfamily. Heterotetramer of 2 PyrK and 2 PyrD type B subunits. The cofactor is FMN.

It is found in the cytoplasm. It catalyses the reaction (S)-dihydroorotate + NAD(+) = orotate + NADH + H(+). It participates in pyrimidine metabolism; UMP biosynthesis via de novo pathway; orotate from (S)-dihydroorotate (NAD(+) route): step 1/1. Its function is as follows. Catalyzes the conversion of dihydroorotate to orotate with NAD(+) as electron acceptor. This is Dihydroorotate dehydrogenase B (NAD(+)), catalytic subunit (pyrDB) from Enterococcus faecalis (strain ATCC 700802 / V583).